The following is a 208-amino-acid chain: MTQIKICGLMRPADVVMVNQALPDAIGMVFAPGRRRRITMATARQLSQQLDPRIRRVGVFTTNQLSEILALVQQHIIQVVQLHATVDDPRIASLMAAHVPVIQAMTPANATQCQADYLLLDNARPGSGQVLDWNQLQSQRPVRPFILAGGLTPTNIVTAINKVYPAMVDVASGVETAGNKDREKINLMVQRAHQTGVSTPLLTEIRRN.

This sequence belongs to the TrpF family.

It catalyses the reaction N-(5-phospho-beta-D-ribosyl)anthranilate = 1-(2-carboxyphenylamino)-1-deoxy-D-ribulose 5-phosphate. Its pathway is amino-acid biosynthesis; L-tryptophan biosynthesis; L-tryptophan from chorismate: step 3/5. The protein is N-(5'-phosphoribosyl)anthranilate isomerase of Lactiplantibacillus plantarum (strain ATCC BAA-793 / NCIMB 8826 / WCFS1) (Lactobacillus plantarum).